We begin with the raw amino-acid sequence, 387 residues long: Probable nitrate transporter NarT (387 aa).

The next 12 membrane-spanning stretches (helical) occupy residues 14–34 (TLSLVAGFMAWSIISPLMPFI), 45–65 (ISVILAIPVILGSVLRVPFGY), 69–89 (IVGAKWVFFWSFIVLLLPIFL), 97–117 (GMLMLSGFFLGIGGAIFSVGV), 137–157 (GVGNIGTAVSSFCAPVLAGAI), 161–181 (NTVRSYLIILSIFAILMFFLG), 211–231 (WYFITFGAFVAFGIFLPNFLV), 246–266 (GIFIALATFLRPVGGVIGDKF), 268–288 (AVQALIIDFVIMIIGALILSL), 294–314 (LFTIGCLAISICAGIGNGLIF), 330–350 (GIVSMMGGLGGFFPPLVITFV), and 358–378 (HLAFFFLAIFGVIALITMIHL).

It belongs to the major facilitator superfamily. Nitrate/nitrite porter (TC 2.A.1.8) family.

It is found in the cell membrane. Functionally, probably required for nitrate uptake under anoxic conditions. Also possibly involved in excretion of nitrite produced by the dissimilatory reduction of nitrate. The polypeptide is Probable nitrate transporter NarT (narT) (Staphylococcus epidermidis (strain ATCC 35984 / DSM 28319 / BCRC 17069 / CCUG 31568 / BM 3577 / RP62A)).